Here is a 467-residue protein sequence, read N- to C-terminus: Replication factor A 51 kDa subunit (467 aa).

Positions 23–105 form a DNA-binding region, OB; that stretch reads WWIRARVADK…SNVNNDYELT (83 aa). A C4-type zinc finger spans residues 313–335; that stretch reads CPTCNKKVTEEGAQGDRFRCEKC.

Belongs to the replication factor A protein 1 family. In terms of assembly, component of the heterotrimeric canonical replication protein A complex (RPA). Post-translationally, the N-terminus is blocked.

Its subcellular location is the nucleus. Its function is as follows. As part of the heterotrimeric replication protein A complex (RPA/RP-A), binds and stabilizes single-stranded DNA intermediates, that form during DNA replication or upon DNA stress. It prevents their reannealing and in parallel, recruits and activates different proteins and complexes involved in DNA metabolism. Thereby, it plays an essential role both in DNA replication and the cellular response to DNA damage. The chain is Replication factor A 51 kDa subunit (RPA1) from Crithidia fasciculata.